The primary structure comprises 679 residues: UvrABC system protein B (679 aa).

Residues 31–414 (ENLTDGLAHQ…ELEKSGSEII (384 aa)) form the Helicase ATP-binding domain. 44-51 (GVTGSGKT) provides a ligand contact to ATP. The Beta-hairpin motif lies at 97–120 (YYDYYQPEAYVPSSDTFIEKDASI). Residues 436 to 589 (QVDDLLSEAR…QTKYNEEHGI (154 aa)) form the Helicase C-terminal domain. The UVR domain maps to 639–674 (QQQIKKLEQQMYKFAQDLEFEKAAAIRDQLHQLREQ).

It belongs to the UvrB family. Forms a heterotetramer with UvrA during the search for lesions. Interacts with UvrC in an incision complex.

The protein resides in the cytoplasm. In terms of biological role, the UvrABC repair system catalyzes the recognition and processing of DNA lesions. A damage recognition complex composed of 2 UvrA and 2 UvrB subunits scans DNA for abnormalities. Upon binding of the UvrA(2)B(2) complex to a putative damaged site, the DNA wraps around one UvrB monomer. DNA wrap is dependent on ATP binding by UvrB and probably causes local melting of the DNA helix, facilitating insertion of UvrB beta-hairpin between the DNA strands. Then UvrB probes one DNA strand for the presence of a lesion. If a lesion is found the UvrA subunits dissociate and the UvrB-DNA preincision complex is formed. This complex is subsequently bound by UvrC and the second UvrB is released. If no lesion is found, the DNA wraps around the other UvrB subunit that will check the other stand for damage. This is UvrABC system protein B from Haemophilus influenzae (strain ATCC 51907 / DSM 11121 / KW20 / Rd).